We begin with the raw amino-acid sequence, 317 residues long: 1D-myo-inositol 2-acetamido-2-deoxy-alpha-D-glucopyranoside deacetylase (317 aa).

H15, D18, and H154 together coordinate Zn(2+). The tract at residues Q289–A317 is disordered.

This sequence belongs to the MshB deacetylase family. It depends on Zn(2+) as a cofactor.

It carries out the reaction 1D-myo-inositol 2-acetamido-2-deoxy-alpha-D-glucopyranoside + H2O = 1D-myo-inositol 2-amino-2-deoxy-alpha-D-glucopyranoside + acetate. Its function is as follows. Catalyzes the deacetylation of 1D-myo-inositol 2-acetamido-2-deoxy-alpha-D-glucopyranoside (GlcNAc-Ins) in the mycothiol biosynthesis pathway. The chain is 1D-myo-inositol 2-acetamido-2-deoxy-alpha-D-glucopyranoside deacetylase from Segniliparus rotundus (strain ATCC BAA-972 / CDC 1076 / CIP 108378 / DSM 44985 / JCM 13578).